Here is a 437-residue protein sequence, read N- to C-terminus: Enolase (437 aa).

Residue glutamine 162 coordinates (2R)-2-phosphoglycerate. Catalysis depends on glutamate 204, which acts as the Proton donor. Mg(2+)-binding residues include aspartate 251, glutamate 297, and aspartate 324. Residues lysine 349, arginine 378, serine 379, and lysine 400 each contribute to the (2R)-2-phosphoglycerate site. Lysine 349 functions as the Proton acceptor in the catalytic mechanism.

It belongs to the enolase family. Mg(2+) serves as cofactor.

It localises to the cytoplasm. It is found in the secreted. Its subcellular location is the cell surface. The enzyme catalyses (2R)-2-phosphoglycerate = phosphoenolpyruvate + H2O. It functions in the pathway carbohydrate degradation; glycolysis; pyruvate from D-glyceraldehyde 3-phosphate: step 4/5. In terms of biological role, catalyzes the reversible conversion of 2-phosphoglycerate (2-PG) into phosphoenolpyruvate (PEP). It is essential for the degradation of carbohydrates via glycolysis. The chain is Enolase from Chlorobium phaeobacteroides (strain DSM 266 / SMG 266 / 2430).